A 499-amino-acid polypeptide reads, in one-letter code: Glycerol kinase (499 aa).

T13 contacts ADP. ATP-binding residues include T13, T14, and S15. T13 serves as a coordination point for sn-glycerol 3-phosphate. An ADP-binding site is contributed by R17. The sn-glycerol 3-phosphate site is built by R83, E84, Y135, and D244. Glycerol contacts are provided by R83, E84, Y135, D244, and Q245. 2 residues coordinate ADP: T266 and G309. Residues T266, G309, Q313, and G410 each coordinate ATP. Residues G410 and N414 each coordinate ADP.

The protein belongs to the FGGY kinase family.

The enzyme catalyses glycerol + ATP = sn-glycerol 3-phosphate + ADP + H(+). The protein operates within polyol metabolism; glycerol degradation via glycerol kinase pathway; sn-glycerol 3-phosphate from glycerol: step 1/1. Its activity is regulated as follows. Inhibited by fructose 1,6-bisphosphate (FBP). In terms of biological role, key enzyme in the regulation of glycerol uptake and metabolism. Catalyzes the phosphorylation of glycerol to yield sn-glycerol 3-phosphate. The chain is Glycerol kinase from Paraburkholderia phytofirmans (strain DSM 17436 / LMG 22146 / PsJN) (Burkholderia phytofirmans).